The primary structure comprises 542 residues: Chaperonin GroEL 1 (542 aa).

ATP contacts are provided by residues 29–32 (TIGP), 86–90 (DGTTT), Gly414, 479–481 (DAL), and Asp495.

Belongs to the chaperonin (HSP60) family. In terms of assembly, forms a cylinder of 14 subunits composed of two heptameric rings stacked back-to-back. Interacts with the co-chaperonin GroES.

The protein resides in the cytoplasm. It carries out the reaction ATP + H2O + a folded polypeptide = ADP + phosphate + an unfolded polypeptide.. Functionally, together with its co-chaperonin GroES, plays an essential role in assisting protein folding. The GroEL-GroES system forms a nano-cage that allows encapsulation of the non-native substrate proteins and provides a physical environment optimized to promote and accelerate protein folding. This Synechococcus sp. (strain JA-3-3Ab) (Cyanobacteria bacterium Yellowstone A-Prime) protein is Chaperonin GroEL 1.